A 90-amino-acid chain; its full sequence is Cell division protein CrgA (90 aa).

Residues 1–25 form a disordered region; it reads MPKARVTKNETAPVSSNPSANRTPV. Residues 9–22 are compositionally biased toward polar residues; the sequence is NETAPVSSNPSANR. 2 helical membrane-spanning segments follow: residues 38–58 and 67–87; these read VIMF…YLVG and LGAW…LMTM.

Belongs to the CrgA family.

The protein localises to the cell membrane. Involved in cell division. The sequence is that of Cell division protein CrgA from Corynebacterium glutamicum (strain R).